The chain runs to 538 residues: Nicotinate phosphoribosyltransferase (538 aa).

Nicotinate-binding residues include tyrosine 21 and threonine 210. Histidine 213 carries the phosphohistidine modification. Residue arginine 318 coordinates nicotinate. Threonine 380 is a 5-phospho-alpha-D-ribose 1-diphosphate binding site. The residue at position 537 (serine 537) is a Phosphoserine.

Belongs to the NAPRTase family. In terms of assembly, homodimer. Requires Mg(2+) as cofactor. Mn(2+) serves as cofactor. Transiently phosphorylated on a His residue during the reaction cycle. Phosphorylation strongly increases the affinity for substrates and increases the rate of nicotinate D-ribonucleotide production. Dephosphorylation regenerates the low-affinity form of the enzyme, leading to product release.

It localises to the cytoplasm. Its subcellular location is the cytosol. It catalyses the reaction nicotinate + 5-phospho-alpha-D-ribose 1-diphosphate + ATP + H2O = nicotinate beta-D-ribonucleotide + ADP + phosphate + diphosphate. It functions in the pathway cofactor biosynthesis; NAD(+) biosynthesis; nicotinate D-ribonucleotide from nicotinate: step 1/1. Its function is as follows. Catalyzes the first step in the biosynthesis of NAD from nicotinic acid, the ATP-dependent synthesis of beta-nicotinate D-ribonucleotide from nicotinate and 5-phospho-D-ribose 1-phosphate. Helps prevent cellular oxidative stress via its role in NAD biosynthesis. In Homo sapiens (Human), this protein is Nicotinate phosphoribosyltransferase (NAPRT).